The primary structure comprises 36 residues: U-limacoditoxin(7)-Dv63 (36 aa).

The first 19 residues, 1-19 (MFKPRVILLITIIAVFSEF), serve as a signal peptide directing secretion.

It belongs to the limacoditoxin-7 family. Expressed by the venom secretory cell of the spine. The spine is a cuticular structure containing a single large nucleated venom-secreting cell at its base. It is an independent unit capable of producing, storing and injecting venom. On the back of D.vulnerans caterpillars, spines are grouped together by 50 to 100 to form scoli, of which there are eight in D.vulnerans.

It is found in the secreted. Peptide with insecticidal and antiparasitic activities. Induces irreversible paralysis in D.melanogaster when tested at high doses. It shows a moderate antiparasitic activity against the major pathogenic nematode of ruminants (H.contortus, EC(50)=41.3 uM). Does not show antimicrobial activities. Does not induce increase in intracellular calcium in mouse DRG neurons, suggesting that it does not induce pain. This is U-limacoditoxin(7)-Dv63 from Doratifera vulnerans (Mottled cup moth).